A 297-amino-acid chain; its full sequence is Alpha-tubulin N-acetyltransferase 1 (297 aa).

Residues 1–184 (MDFPYDLNAL…NNFVVFAGFF (184 aa)) form the N-acetyltransferase domain. Residues 118–131 (FYVTETLQRHGYGS) and 154–163 (SPKFLSFLEK) each bind acetyl-CoA. Positions 226–297 (FVRPGGPPHS…SLNRSRLSFH (72 aa)) are disordered. Residues 230-240 (GGPPHSPPLLP) show a composition bias toward pro residues. A compositionally biased stretch (low complexity) spans 241–264 (SSPQSRSLSVGSSPSRAPLRPAAA). Polar residues-rich tracts occupy residues 266–278 (VLQQGQTPSSPLN) and 286–297 (TSSLNRSRLSFH).

The protein belongs to the acetyltransferase ATAT1 family. As to quaternary structure, monomer.

The protein resides in the cytoplasm. It is found in the membrane. Its subcellular location is the clathrin-coated pit. It localises to the cell junction. The protein localises to the focal adhesion. The protein resides in the cell projection. It is found in the axon. Its subcellular location is the cytoskeleton. It localises to the spindle. The enzyme catalyses L-lysyl-[alpha-tubulin] + acetyl-CoA = N(6)-acetyl-L-lysyl-[alpha-tubulin] + CoA + H(+). Functionally, specifically acetylates 'Lys-40' in alpha-tubulin on the lumenal side of microtubules. Promotes microtubule destabilization and accelerates microtubule dynamics; this activity may be independent of acetylation activity. Acetylates alpha-tubulin with a slow enzymatic rate, due to a catalytic site that is not optimized for acetyl transfer. Enters the microtubule through each end and diffuses quickly throughout the lumen of microtubules. Acetylates only long/old microtubules because of its slow acetylation rate since it does not have time to act on dynamically unstable microtubules before the enzyme is released. May be involved in neuron development. Acetylates alpha-tubulin in neurons, but not in cilia. This chain is Alpha-tubulin N-acetyltransferase 1, found in Danio rerio (Zebrafish).